A 237-amino-acid chain; its full sequence is Ribosomal RNA small subunit methyltransferase G (237 aa).

Residues Gly72, Leu77, 123-124 (AE), and Arg138 contribute to the S-adenosyl-L-methionine site. Residues 210 to 237 (TALETGTKAAPSRSPRKPGGRKKRGRKR) are disordered. The span at 223–237 (SPRKPGGRKKRGRKR) shows a compositional bias: basic residues.

Belongs to the methyltransferase superfamily. RNA methyltransferase RsmG family.

Its subcellular location is the cytoplasm. In terms of biological role, specifically methylates the N7 position of guanine in position 518 of 16S rRNA. In Thermobifida fusca (strain YX), this protein is Ribosomal RNA small subunit methyltransferase G.